Reading from the N-terminus, the 598-residue chain is Polypeptide N-acetylgalactosaminyltransferase 17 (598 aa).

At 1–6 the chain is on the cytoplasmic side; sequence MASLRR. Residues 7–27 form a helical; Signal-anchor for type II membrane protein membrane-spanning segment; it reads VKVLLVLNLIAVAGFVLFLAK. Topologically, residues 28-598 are lumenal; that stretch reads CRPIAVRSGD…QRWTIKNSIK (571 aa). N-linked (GlcNAc...) asparagine glycosylation occurs at asparagine 50. 2 disulfide bridges follow: cysteine 142–cysteine 373 and cysteine 364–cysteine 443. Residues 151 to 262 are catalytic subdomain A; that stretch reads LPQISIIFIF…AGWAEPVLSR (112 aa). Residues aspartate 192 and arginine 223 each contribute to the substrate site. The Mn(2+) site is built by aspartate 246, histidine 248, and histidine 378. The catalytic subdomain B stretch occupies residues 319–381; the sequence is PIRTPAMIGC…PCSRVAHIER (63 aa). 2 residues coordinate substrate: arginine 381 and tyrosine 386. N-linked (GlcNAc...) asparagine glycosylation is found at asparagine 461 and asparagine 486. The region spanning 465 to 594 is the Ricin B-type lectin domain; it reads AYGELRNNKA…SCTGQRWTIK (130 aa). 3 cysteine pairs are disulfide-bonded: cysteine 478/cysteine 494, cysteine 526/cysteine 541, and cysteine 568/cysteine 586.

The protein belongs to the glycosyltransferase 2 family. GalNAc-T subfamily. The cofactor is Mn(2+). Highly expressed in brain and heart. Weakly expressed in kidney, liver, lung and spleen.

The protein resides in the golgi apparatus membrane. The catalysed reaction is L-seryl-[protein] + UDP-N-acetyl-alpha-D-galactosamine = a 3-O-[N-acetyl-alpha-D-galactosaminyl]-L-seryl-[protein] + UDP + H(+). It catalyses the reaction L-threonyl-[protein] + UDP-N-acetyl-alpha-D-galactosamine = a 3-O-[N-acetyl-alpha-D-galactosaminyl]-L-threonyl-[protein] + UDP + H(+). The protein operates within protein modification; protein glycosylation. May catalyze the initial reaction in O-linked oligosaccharide biosynthesis, the transfer of an N-acetyl-D-galactosamine residue to a serine or threonine residue on the protein receptor. The protein is Polypeptide N-acetylgalactosaminyltransferase 17 of Homo sapiens (Human).